Reading from the N-terminus, the 571-residue chain is MKQSKLLMPTLREVPADAEVKSHQLLLKAGFIRPVSAGTFSYLPMAKRVLNKIEQIIREEMDRIDANEMLVPEILPAELWQKSGRYTTYGPNLYKFKNRQDRDFILGPTHEETFTQLMADDIKSYKKLPLVVYQIQPKFRDENRPRFGLLRTREFIMKDAYSFSADQAGLDTAFRNMESAYTNVFDRIGLNYRAIVGDAGAMGGSDSKEFSAPAAAGEDIIAYSDTTDYAANLEMAKDFYERQKPTFSAEPLEKIDTPNEKTIEELSQLLDVPAEKLAKTIMFMADGELVAVVTTGDFEVNDVKVQNFLQADTLELAEEGQVKALIGASFGSLGPVKLPENVRLLVDERAADLVNFAAGANEDGKHYLNINWQRDVQLTEENIGDFRTAREGDVAVDGHGHLVFTKGIEIGHIFKLGTRYSKAMGAQVLDENGRQVDMIMGSYGIGVSRLLSAIVEQKADDDGLVWPASVAPFDVHIVPVNTKDDEQAGVASQLEELLTKQGLEVLIDDRKERAGVKFADADLIGLPIRITVGKKASEDVVEVKVRASNTNIEMRVSEVVDSVSVLLNGDK.

This sequence belongs to the class-II aminoacyl-tRNA synthetase family. ProS type 1 subfamily. Homodimer.

It is found in the cytoplasm. It catalyses the reaction tRNA(Pro) + L-proline + ATP = L-prolyl-tRNA(Pro) + AMP + diphosphate. Catalyzes the attachment of proline to tRNA(Pro) in a two-step reaction: proline is first activated by ATP to form Pro-AMP and then transferred to the acceptor end of tRNA(Pro). As ProRS can inadvertently accommodate and process non-cognate amino acids such as alanine and cysteine, to avoid such errors it has two additional distinct editing activities against alanine. One activity is designated as 'pretransfer' editing and involves the tRNA(Pro)-independent hydrolysis of activated Ala-AMP. The other activity is designated 'posttransfer' editing and involves deacylation of mischarged Ala-tRNA(Pro). The misacylated Cys-tRNA(Pro) is not edited by ProRS. The polypeptide is Proline--tRNA ligase (Leuconostoc citreum (strain KM20)).